The following is a 46-amino-acid chain: uncharacterized protein (46 aa).

This is an uncharacterized protein from Dictyostelium discoideum (Social amoeba).